The chain runs to 220 residues: UPF0319 protein YccT (220 aa).

The N-terminal stretch at 1 to 20 (MKTGALATFLALCLPVTVFA) is a signal peptide.

This sequence belongs to the UPF0319 family.

In Salmonella agona (strain SL483), this protein is UPF0319 protein YccT.